We begin with the raw amino-acid sequence, 88 residues long: Small ribosomal subunit protein uS15c (88 aa).

Belongs to the universal ribosomal protein uS15 family. In terms of assembly, part of the 30S ribosomal subunit.

It is found in the plastid. The protein localises to the chloroplast. The sequence is that of Small ribosomal subunit protein uS15c (rps15) from Pinus koraiensis (Korean pine).